A 700-amino-acid polypeptide reads, in one-letter code: MSKTRIYEVAKELGMNSKELMEFLEKELNISVKSHMSTIEEETVQVIMDLIEEERQTKKEVKKQKEPSKEKGKSSEQVKVKEKSKEEPVEEKFLREVTITSHDLSLDILAKQIGLEQNDIIKDMFMKGVVLRPGQKLDITMAENIAMNYNVILNFEIEKKETEEGKEQDIEAILAKKWNDIYEKEKDKLAPRPPVVTIMGHVDHGKTTLLDKIRNTHVADKEEGGITQSIGAYQIEYNGQKITFIDTPGHEAFTEMRARGAQVTDIVVLIIAADDGVMPQTIEAYNHAKSANVPIIVAINKIDKPNANVELTKQQMVSKLNLIPEDWGGDTITVLVSAKTGEGIDELLEMILLVSEMQEIRCIPDGKARAVIIESRVDKAMGPLGTVIVKDGILKVGDDFISGSTYGRVRRLINDKGESLIKAVPSTPVQVLGFNDVPNTHSILYVIDSKEEARTLAEKVKEKEEEKSKGPAKRHVKLEDIMQKMEEEEKKKLNILLKASTYGEIEALRNAIQKFENPEIDIEIIHAGIGPVSTSDIMLASASDAIVLGFRVKADSKALKMAEAEGIEVRRYNIIFDLIDDIKKALEGMLEPIQKEELTGNGVIKEEFKIKGVGKIAGVQVNEGYVQRDGGVRIYRNGGLIADVKIKSLKHYKDEVKSIEAPKECGIQFENFEDFTKGDELEFYKHVFVKRELGLEQKTK.

Residues 58-85 (KKEVKKQKEPSKEKGKSSEQVKVKEKSK) form a disordered region. In terms of domain architecture, tr-type G spans 191–365 (PRPPVVTIMG…EMQEIRCIPD (175 aa)). Positions 200–207 (GHVDHGKT) are G1. 200-207 (GHVDHGKT) provides a ligand contact to GTP. Positions 225–229 (GITQS) are G2. The interval 246–249 (DTPG) is G3. GTP contacts are provided by residues 246-250 (DTPGH) and 300-303 (NKID). Residues 300 to 303 (NKID) are G4. The segment at 337–339 (SAK) is G5.

Belongs to the TRAFAC class translation factor GTPase superfamily. Classic translation factor GTPase family. IF-2 subfamily.

Its subcellular location is the cytoplasm. Its function is as follows. One of the essential components for the initiation of protein synthesis. Protects formylmethionyl-tRNA from spontaneous hydrolysis and promotes its binding to the 30S ribosomal subunits. Also involved in the hydrolysis of GTP during the formation of the 70S ribosomal complex. In Petrotoga mobilis (strain DSM 10674 / SJ95), this protein is Translation initiation factor IF-2.